Consider the following 497-residue polypeptide: L-amino-acid oxidase BjussuLAAO-I (497 aa).

The N-terminal stretch at 1-13 (MNVFFMFSKPGKL) is a signal peptide. Residues C23 and C186 are joined by a disulfide bond. Residues 56–57 (MS), 76–77 (EA), 76–80 (EASER), Q84, and 100–103 (GPMR) each bind FAD. Residue R103 coordinates substrate. N185 is a glycosylation site (N-linked (GlcNAc...) asparagine). H236 is a binding site for substrate. V274 lines the FAD pocket. The cysteines at positions 344 and 425 are disulfide-linked. Y385 contacts substrate. FAD contacts are provided by residues E470, 477-482 (GWIAST), and 478-482 (WIAST). 477–478 (GW) lines the substrate pocket.

It belongs to the flavin monoamine oxidase family. FIG1 subfamily. As to quaternary structure, homodimer; non-covalently linked. Requires FAD as cofactor. In terms of tissue distribution, expressed by the venom gland.

The protein localises to the secreted. The enzyme catalyses an L-alpha-amino acid + O2 + H2O = a 2-oxocarboxylate + H2O2 + NH4(+). It carries out the reaction L-leucine + O2 + H2O = 4-methyl-2-oxopentanoate + H2O2 + NH4(+). It catalyses the reaction L-phenylalanine + O2 + H2O = 3-phenylpyruvate + H2O2 + NH4(+). The catalysed reaction is L-tryptophan + O2 + H2O = indole-3-pyruvate + H2O2 + NH4(+). The enzyme catalyses L-methionine + O2 + H2O = 4-methylsulfanyl-2-oxobutanoate + H2O2 + NH4(+). It carries out the reaction L-isoleucine + O2 + H2O = (S)-3-methyl-2-oxopentanoate + H2O2 + NH4(+). It catalyses the reaction L-tyrosine + O2 + H2O = 3-(4-hydroxyphenyl)pyruvate + H2O2 + NH4(+). The catalysed reaction is L-cysteine + O2 + H2O = 2-oxo-3-sulfanylpropanoate + H2O2 + NH4(+). Functionally, catalyzes an oxidative deamination of predominantly hydrophobic and aromatic L-amino acids, thus producing hydrogen peroxide that may contribute to the diverse toxic effects of this enzyme. Shows high specificity for L-Met, L-Leu, L-Phe, L-Tyr, L-Ile, L-Trp, a moderate activity on L-Cys and low activity on L-Val, L-Lys, L-Arg, L-His, L-Gln, L-Thr and L-Ser. Exhibits diverse biological activities, such as hemorrhage, hemolysis, edema, apoptosis of vascular endothelial cells or tumor cell lines, and antibacterial, as well as regulation of platelet aggregation. Effects of snake L-amino oxidases on platelets are controversial, since they either induce aggregation or inhibit agonist-induced aggregation. These different effects are probably due to different experimental conditions. In vitro, shows parasiticidal activities against both trypanosomes and leishmania, as a result of enzyme-catalyzed hydrogen peroxide production. The sequence is that of L-amino-acid oxidase BjussuLAAO-I from Bothrops jararacussu (Jararacussu).